We begin with the raw amino-acid sequence, 358 residues long: Histidinol-phosphate aminotransferase (358 aa).

Position 221 is an N6-(pyridoxal phosphate)lysine (lysine 221).

The protein belongs to the class-II pyridoxal-phosphate-dependent aminotransferase family. Histidinol-phosphate aminotransferase subfamily. In terms of assembly, homodimer. It depends on pyridoxal 5'-phosphate as a cofactor.

It catalyses the reaction L-histidinol phosphate + 2-oxoglutarate = 3-(imidazol-4-yl)-2-oxopropyl phosphate + L-glutamate. Its pathway is amino-acid biosynthesis; L-histidine biosynthesis; L-histidine from 5-phospho-alpha-D-ribose 1-diphosphate: step 7/9. The protein is Histidinol-phosphate aminotransferase of Caldicellulosiruptor saccharolyticus (strain ATCC 43494 / DSM 8903 / Tp8T 6331).